Here is a 467-residue protein sequence, read N- to C-terminus: Uronate isomerase (467 aa).

It belongs to the metallo-dependent hydrolases superfamily. Uronate isomerase family.

It carries out the reaction D-glucuronate = D-fructuronate. It catalyses the reaction aldehydo-D-galacturonate = keto-D-tagaturonate. It participates in carbohydrate metabolism; pentose and glucuronate interconversion. This chain is Uronate isomerase, found in Streptococcus uberis (strain ATCC BAA-854 / 0140J).